Reading from the N-terminus, the 414-residue chain is Enolase (414 aa).

Glutamine 162 is a (2R)-2-phosphoglycerate binding site. Catalysis depends on glutamate 204, which acts as the Proton donor. Residues aspartate 239, glutamate 280, and aspartate 307 each contribute to the Mg(2+) site. Positions 332, 361, 362, and 383 each coordinate (2R)-2-phosphoglycerate. The active-site Proton acceptor is the lysine 332.

The protein belongs to the enolase family. Mg(2+) is required as a cofactor.

The protein resides in the cytoplasm. Its subcellular location is the secreted. It is found in the cell surface. The enzyme catalyses (2R)-2-phosphoglycerate = phosphoenolpyruvate + H2O. It functions in the pathway carbohydrate degradation; glycolysis; pyruvate from D-glyceraldehyde 3-phosphate: step 4/5. Functionally, catalyzes the reversible conversion of 2-phosphoglycerate (2-PG) into phosphoenolpyruvate (PEP). It is essential for the degradation of carbohydrates via glycolysis. This Campylobacter jejuni subsp. jejuni serotype O:2 (strain ATCC 700819 / NCTC 11168) protein is Enolase.